Reading from the N-terminus, the 659-residue chain is MAAAVLNPGFFLLILLLSFSISPSLQYVSESEPLVRFKNSVKITKGDLNSWREGTDPCSGKWFGIYCQKGLTVSGIHVTRLGLSGTITVDDLKDLPNLKTIRLDNNLLSGPLPHFFKLRGLKSLMLSNNSFSGEIRDDFFKDMSKLKRLFLDHNKFEGSIPSSITQLPQLEELHMQSNNLTGEIPPEFGSMKNLKVLDLSTNSLDGIVPQSIADKKNLAVNLTENEYLCGPVVDVGCENIELNDPQEGQPPSKPSSSVPETSNKAAINAIMVSISLLLLFFIIVGVIKRRNKKKNPDFRMLANNRENDVVEVRISESSSTTAKRSTDSSRKRGGHSDDGSTKKGVSNIGKGGNGGGGGALGGGMGDIIMVNTDKGSFGLPDLMKAAAEVLGNGSLGSAYKAVMTTGLSVVVKRIRDMNQLAREPFDVEMRRFGKLRHPNILTPLAYHYRREEKLVVSEYMPKSSLLYVLHGDRGIYHSELTWATRLKIIQGVAHGMKFLHEEFASYDLPHGNLKSSNVLLSETYEPLISDYAFLPLLQPSNASQALFAFKTPEFAQTQQVSHKSDVYCLGIIILEILTGKFPSQYLNNGKGGTDIVQWVQSSVAEQKEEELIDPEIVNNTESMRQMVELLRVGAACIASNPDERLDMREAVRRIEQVKT.

A signal peptide spans 1–26 (MAAAVLNPGFFLLILLLSFSISPSLQ). Residues 27–266 (YVSESEPLVR…SVPETSNKAA (240 aa)) lie on the Extracellular side of the membrane. Cysteine 58 and cysteine 67 are joined by a disulfide. 5 LRR repeats span residues 95 to 118 (LPNL…FFKL), 120 to 142 (GLKS…FFKD), 143 to 167 (MSKL…ITQL), 168 to 190 (PQLE…EFGS), and 192 to 214 (KNLK…SIAD). Residue asparagine 128 is glycosylated (N-linked (GlcNAc...) asparagine). N-linked (GlcNAc...) asparagine glycosylation is present at asparagine 179. Asparagine 221 carries N-linked (GlcNAc...) asparagine glycosylation. The segment at 226-242 (EYLCGPVVDVGCENIEL) is LURE peptides binding. An intrachain disulfide couples cysteine 229 to cysteine 237. Positions 241–260 (ELNDPQEGQPPSKPSSSVPE) are disordered. Residues 267–287 (INAIMVSISLLLLFFIIVGVI) traverse the membrane as a helical segment. The Cytoplasmic segment spans residues 288 to 659 (KRRNKKKNPD…AVRRIEQVKT (372 aa)). The disordered stretch occupies residues 312 to 354 (VRISESSSTTAKRSTDSSRKRGGHSDDGSTKKGVSNIGKGGNG). The span at 324–341 (RSTDSSRKRGGHSDDGST) shows a compositional bias: basic and acidic residues. The region spanning 384–659 (KAAAEVLGNG…AVRRIEQVKT (276 aa)) is the Protein kinase domain. ATP-binding positions include 390–398 (LGNGSLGSA) and lysine 412. A Phosphoserine modification is found at serine 464. A phosphothreonine mark is found at threonine 484 and threonine 557. Serine 561 is modified (phosphoserine).

The protein belongs to the protein kinase superfamily. Ser/Thr protein kinase family. Interacts with ROPGEF8, ROPGEF9, ROPGEF12, ROPGEF13, PRK3, LIP1 and LIP2. Binds to LURE peptides via its LRR repeats; interacts with LURE1.1, LURE1.2, LURE1.3 and LURE1.4. As to expression, expressed specifically in the pollen tube, predominantly at the tip.

It localises to the cell membrane. It is found in the cytoplasmic granule. In terms of biological role, key receptor for sensing species-specific attractants in cooperation with other pollen receptor-like kinases. Essential for pollen tube reorientation toward attractant peptides. The chain is Pollen receptor-like kinase 6 from Arabidopsis thaliana (Mouse-ear cress).